The following is an 852-amino-acid chain: Transient receptor potential cation channel subfamily V member 4 (852 aa).

At 1 to 455 the chain is on the cytoplasmic side; the sequence is MADPEDPRDA…RDKWRKFGAV (455 aa). Positions 30–51 are disordered; the sequence is VEDTPSPAEPSRGPPGAVDGKQ. ATP contacts are provided by residues K178, K183, N187, 222 to 225, and R234; that span reads YRGQ. ANK repeat units follow at residues 223–252 and 270–299; these read RGQT…DVHA and FGEL…KQAD. Residues 235 to 237, 282 to 285, and K330 contribute to the a 1,2-diacyl-sn-glycero-3-phospho-(1D-myo-inositol-4,5-bisphosphate) site; these read RCK and NQPH. The ANK 3 repeat unit spans residues 355 to 387; it reads DGLSPLMMAAKTGKIGIFQHIIRREIADEDVRH. The helical transmembrane segment at 456-476 threads the bilayer; sequence SFYISVVSYLCAMIIFTLIAY. Topologically, residues 477 to 493 are extracellular; the sequence is YRPMEGPPPYPYTTTID. The helical transmembrane segment at 494-520 threads the bilayer; it reads YLRLAGEIITLLTGILFFFSNIKDLFM. Residues 521–533 are Cytoplasmic-facing; sequence KKCPGVNSFFIDG. Residues 534–554 form a helical membrane-spanning segment; that stretch reads SFQLLYFIYSVLVIVTAGLYL. Topologically, residues 555–558 are extracellular; that stretch reads GGVE. A helical membrane pass occupies residues 559–579; that stretch reads AYLAVMVFALVLGWMNALYFT. Over 580-594 the chain is Cytoplasmic; that stretch reads RGLKLTGTYSIMIQK. Residues 595 to 622 form a helical membrane-spanning segment; the sequence is ILFKDLFRFLLVYLLFMIGYASALVSLL. Topologically, residues 623–651 are extracellular; the sequence is NPCPSSESCSEDHSNCTLPTYPSCRDSQT. The segment at residues 652 to 671 is an intramembrane region (pore-forming); that stretch reads FSTFLLDLFKLTIGMGDLEM. A Selectivity filter motif is present at residues 665–668; it reads GMGD. D668 contacts Ca(2+). Residues 672 to 679 lie on the Extracellular side of the membrane; it reads LESAKYPG. Residues 680-708 traverse the membrane as a helical segment; the sequence is VFIILLVTYIILTFVLLLNMLIALMGETV. Topologically, residues 709–852 are cytoplasmic; it reads GQVSKESKHI…RHGQTPSSPL (144 aa).

Belongs to the transient receptor (TC 1.A.4) family. TrpV subfamily. TRPV4 sub-subfamily. In terms of assembly, homotetramer. Interacts with Ca(2+)-calmodulin.

It localises to the apical cell membrane. The protein localises to the cell junction. The protein resides in the adherens junction. It catalyses the reaction Ca(2+)(in) = Ca(2+)(out). Its activity is regulated as follows. ATP binding enhances channel sensitivity to agonists. Ca(2+)-calmodulin prevents the ATP-mediated increased sensitivity to agonists. In terms of biological role, non-selective calcium permeant cation channel involved in osmotic sensitivity and mechanosensitivity. Activation by exposure to hypotonicity within the physiological range exhibits an outward rectification. Also activated by phorbol esters. Channel activity seems to be regulated by a calmodulin-dependent mechanism. The sequence is that of Transient receptor potential cation channel subfamily V member 4 (TRPV4) from Gallus gallus (Chicken).